The primary structure comprises 506 residues: Galactose/methyl galactoside import ATP-binding protein MglA (506 aa).

ABC transporter domains follow at residues 14–249 and 260–506; these read LTMT…VGRE and VPKE…AKYL. Residue 46–53 coordinates ATP; sequence GENGAGKS.

The protein belongs to the ABC transporter superfamily. Galactose/methyl galactoside importer (TC 3.A.1.2.3) family. As to quaternary structure, the complex is composed of one ATP-binding protein (MglA), two transmembrane proteins (MglC) and a solute-binding protein (MglB).

Its subcellular location is the cell inner membrane. The catalysed reaction is D-galactose(out) + ATP + H2O = D-galactose(in) + ADP + phosphate + H(+). It catalyses the reaction methyl beta-D-galactoside(out) + ATP + H2O = methyl beta-D-galactoside(in) + ADP + phosphate + H(+). In terms of biological role, part of the ABC transporter complex MglABC involved in galactose/methyl galactoside import. Responsible for energy coupling to the transport system. The polypeptide is Galactose/methyl galactoside import ATP-binding protein MglA (Haemophilus influenzae (strain 86-028NP)).